A 271-amino-acid chain; its full sequence is Mannosyl-3-phosphoglycerate phosphatase (271 aa).

Catalysis depends on D13, which acts as the Nucleophile. Residues D13, D15, and D214 each coordinate Mg(2+).

It belongs to the HAD-like hydrolase superfamily. MPGP family. It depends on Mg(2+) as a cofactor.

It localises to the cytoplasm. It catalyses the reaction 2-O-(alpha-D-mannosyl)-3-phosphoglycerate + H2O = (2R)-2-O-(alpha-D-mannosyl)-glycerate + phosphate. The polypeptide is Mannosyl-3-phosphoglycerate phosphatase (Escherichia coli (strain 55989 / EAEC)).